The chain runs to 152 residues: Cell division protein SepF (152 aa).

Residues 21–56 (EYIETEQDHPEEHEQQKDKQPAYAQKPQGKQNVVSL) are disordered. The span at 26-40 (EQDHPEEHEQQKDKQ) shows a compositional bias: basic and acidic residues.

Belongs to the SepF family. Homodimer. Interacts with FtsZ.

The protein resides in the cytoplasm. Its function is as follows. Cell division protein that is part of the divisome complex and is recruited early to the Z-ring. Probably stimulates Z-ring formation, perhaps through the cross-linking of FtsZ protofilaments. Its function overlaps with FtsA. This chain is Cell division protein SepF, found in Bacillus velezensis (strain DSM 23117 / BGSC 10A6 / LMG 26770 / FZB42) (Bacillus amyloliquefaciens subsp. plantarum).